The following is a 309-amino-acid chain: Malate dehydrogenase (309 aa).

Residues 9-14 and aspartate 33 contribute to the NAD(+) site; that span reads GAGAVG. Positions 82 and 88 each coordinate substrate. NAD(+) contacts are provided by residues asparagine 95 and 118–120; that span reads VTN. Positions 120 and 151 each coordinate substrate. Histidine 175 (proton acceptor) is an active-site residue.

This sequence belongs to the LDH/MDH superfamily. MDH type 3 family.

The catalysed reaction is (S)-malate + NAD(+) = oxaloacetate + NADH + H(+). Its function is as follows. Catalyzes the reversible oxidation of malate to oxaloacetate. The polypeptide is Malate dehydrogenase (Thermomicrobium roseum (strain ATCC 27502 / DSM 5159 / P-2)).